Consider the following 881-residue polypeptide: Beta-mannosidase (881 aa).

The signal sequence occupies residues 1–18 (MHLHLLFLLALCGAGCMA). Residues Asn-35, Asn-77, Asn-89, and Asn-113 are each glycosylated (N-linked (GlcNAc...) asparagine). Cysteines 167 and 176 form a disulfide. Residue 190–192 (WDW) participates in substrate binding. N-linked (GlcNAc...) asparagine glycans are attached at residues Asn-226, Asn-297, and Asn-302. Asn-456 serves as a coordination point for substrate. Glu-457 serves as the catalytic Proton donor. 3 disulfide bridges follow: Cys-540–Cys-629, Cys-732–Cys-761, and Cys-764–Cys-769. Glu-554 functions as the Nucleophile in the catalytic mechanism. The N-linked (GlcNAc...) asparagine glycan is linked to Asn-803.

It belongs to the glycosyl hydrolase 2 family. As to quaternary structure, monomer.

Its subcellular location is the lysosome. The catalysed reaction is Hydrolysis of terminal, non-reducing beta-D-mannose residues in beta-D-mannosides.. Its pathway is glycan metabolism; N-glycan degradation. Functionally, exoglycosidase that cleaves the single beta-linked mannose residue from the non-reducing end of all N-linked glycoprotein oligosaccharides. This is Beta-mannosidase from Rattus norvegicus (Rat).